Consider the following 348-residue polypeptide: Histidinol-phosphate aminotransferase (348 aa).

At Lys211 the chain carries N6-(pyridoxal phosphate)lysine.

Belongs to the class-II pyridoxal-phosphate-dependent aminotransferase family. Histidinol-phosphate aminotransferase subfamily. In terms of assembly, homodimer. It depends on pyridoxal 5'-phosphate as a cofactor.

It carries out the reaction L-histidinol phosphate + 2-oxoglutarate = 3-(imidazol-4-yl)-2-oxopropyl phosphate + L-glutamate. The protein operates within amino-acid biosynthesis; L-histidine biosynthesis; L-histidine from 5-phospho-alpha-D-ribose 1-diphosphate: step 7/9. This is Histidinol-phosphate aminotransferase from Pseudomonas entomophila (strain L48).